The chain runs to 207 residues: Ribonuclease HII (207 aa).

The 188-residue stretch at 20–207 folds into the RNase H type-2 domain; the sequence is QLFAGVDEVG…KPVKRVLGIE (188 aa). Residues D26, E27, and D118 each coordinate a divalent metal cation.

Belongs to the RNase HII family. Mn(2+) is required as a cofactor. Requires Mg(2+) as cofactor.

Its subcellular location is the cytoplasm. The catalysed reaction is Endonucleolytic cleavage to 5'-phosphomonoester.. Functionally, endonuclease that specifically degrades the RNA of RNA-DNA hybrids. This chain is Ribonuclease HII, found in Aliivibrio fischeri (strain ATCC 700601 / ES114) (Vibrio fischeri).